Reading from the N-terminus, the 49-residue chain is Small ribosomal subunit protein eS31 (49 aa).

4 residues coordinate Zn(2+): cysteine 21, cysteine 24, cysteine 39, and cysteine 42. A C4-type zinc finger spans residues 21–42 (CPRCGNGVFLAEHEDRMSCGRC).

It belongs to the eukaryotic ribosomal protein eS31 family. Part of the 30S ribosomal subunit. Requires Zn(2+) as cofactor.

The polypeptide is Small ribosomal subunit protein eS31 (Methanothrix thermoacetophila (strain DSM 6194 / JCM 14653 / NBRC 101360 / PT) (Methanosaeta thermophila)).